A 206-amino-acid chain; its full sequence is Large ribosomal subunit protein bL25 (206 aa).

A disordered region spans residues 184–206 (AEEAAAEVAEPEVIKKGKEEEEE). Over residues 195–206 (EVIKKGKEEEEE) the composition is skewed to basic and acidic residues.

It belongs to the bacterial ribosomal protein bL25 family. CTC subfamily. As to quaternary structure, part of the 50S ribosomal subunit; part of the 5S rRNA/L5/L18/L25 subcomplex. Contacts the 5S rRNA. Binds to the 5S rRNA independently of L5 and L18.

Functionally, this is one of the proteins that binds to the 5S RNA in the ribosome where it forms part of the central protuberance. This chain is Large ribosomal subunit protein bL25, found in Thermus thermophilus (strain ATCC BAA-163 / DSM 7039 / HB27).